The sequence spans 804 residues: G-type lectin S-receptor-like serine/threonine-protein kinase LECRK4 (804 aa).

The first 23 residues, 1–23 (MAPPLFLLSLQLLVLLSSPSAQA), serve as a signal peptide directing secretion. Residues 24-150 (QNISLGTSLT…GGSTISWETF (127 aa)) enclose the Bulb-type lectin domain. Residues 24 to 458 (QNISLGTSLT…DKKLWILGSS (435 aa)) lie on the Extracellular side of the membrane. Asn-25, Asn-58, Asn-216, Asn-227, Asn-238, and Asn-243 each carry an N-linked (GlcNAc...) asparagine glycan. Residues 290-341 (PENICNAQTKVGSGTCGFNSYCMFDGSNNQTSCVCPEQYSFFDEVRKYRGCR) enclose the EGF-like; atypical domain. Disulfide bonds link Cys-294–Cys-311, Cys-305–Cys-322, Cys-324–Cys-340, Cys-386–Cys-406, and Cys-390–Cys-396. A glycan (N-linked (GlcNAc...) asparagine) is linked at Asn-318. The 78-residue stretch at 349 to 426 (CDLDEAASMA…IMGSGVQRTV (78 aa)) folds into the PAN domain. N-linked (GlcNAc...) asparagine glycosylation is present at Asn-434. The chain crosses the membrane as a helical span at residues 459–479 (LLLGGSVIANFALSSVLLFGT). Residues 480 to 804 (YCTITRKDVQ…DSSSVVNSFP (325 aa)) lie on the Cytoplasmic side of the membrane. The region spanning 514 to 790 (DGFKEVLGTG…TQMLDGADAI (277 aa)) is the Protein kinase domain. ATP contacts are provided by residues 520–528 (LGTGASGIV) and Lys-544. Asp-638 functions as the Proton acceptor in the catalytic mechanism.

Belongs to the protein kinase superfamily. Ser/Thr protein kinase family.

It is found in the membrane. It catalyses the reaction L-seryl-[protein] + ATP = O-phospho-L-seryl-[protein] + ADP + H(+). The enzyme catalyses L-threonyl-[protein] + ATP = O-phospho-L-threonyl-[protein] + ADP + H(+). In terms of biological role, does not seem to be involved in resistance against the herbivorous insect brown planthopper (N.lugens, BPH). This is G-type lectin S-receptor-like serine/threonine-protein kinase LECRK4 from Oryza sativa subsp. indica (Rice).